The following is a 370-amino-acid chain: Protein-glutamate methylesterase/protein-glutamine glutaminase 3 (370 aa).

Residues 3-119 (KVLIVDDSAL…SLNVSRIERE (117 aa)) form the Response regulatory domain. Residue Asp53 is modified to 4-aspartylphosphate. A CheB-type methylesterase domain is found at 166–360 (SLTEIGVVLI…GQLNAWMSRT (195 aa)). Active-site residues include Ser178, His205, and Asp302.

This sequence belongs to the CheB family. Phosphorylated by CheA. Phosphorylation of the N-terminal regulatory domain activates the methylesterase activity.

It is found in the cytoplasm. The enzyme catalyses [protein]-L-glutamate 5-O-methyl ester + H2O = L-glutamyl-[protein] + methanol + H(+). It catalyses the reaction L-glutaminyl-[protein] + H2O = L-glutamyl-[protein] + NH4(+). Involved in chemotaxis. Part of a chemotaxis signal transduction system that modulates chemotaxis in response to various stimuli. Catalyzes the demethylation of specific methylglutamate residues introduced into the chemoreceptors (methyl-accepting chemotaxis proteins or MCP) by CheR. Also mediates the irreversible deamidation of specific glutamine residues to glutamic acid. The protein is Protein-glutamate methylesterase/protein-glutamine glutaminase 3 of Rhodospirillum rubrum (strain ATCC 11170 / ATH 1.1.1 / DSM 467 / LMG 4362 / NCIMB 8255 / S1).